A 344-amino-acid polypeptide reads, in one-letter code: Chalcone synthase A (344 aa).

Cys167 is an active-site residue.

It belongs to the thiolase-like superfamily. Chalcone/stilbene synthases family.

It carries out the reaction (E)-4-coumaroyl-CoA + 3 malonyl-CoA + 3 H(+) = 2',4,4',6'-tetrahydroxychalcone + 3 CO2 + 4 CoA. It functions in the pathway secondary metabolite biosynthesis; flavonoid biosynthesis. Functionally, the primary product of this enzyme is 4,2',4',6'-tetrahydroxychalcone (also termed naringenin-chalcone or chalcone) which can under specific conditions spontaneously isomerize into naringenin. In Ipomoea nil (Japanese morning glory), this protein is Chalcone synthase A (CHSA).